The chain runs to 134 residues: Interleukin-5 (134 aa).

An N-terminal signal peptide occupies residues 1-19 (MRMLLHLSLLALGASYMYA). T22 carries an O-linked (GalNAc...) threonine glycan. N-linked (GlcNAc...) asparagine glycans are attached at residues N47 and N90.

The protein belongs to the IL-5 family. As to quaternary structure, homodimer; disulfide-linked. Interacts with IL5RA. Interacts with CSF2RB.

The protein localises to the secreted. Homodimeric cytokine expressed predominantly by T-lymphocytes and NK cells that plays an important role in the survival, differentiation, and chemotaxis of eosinophils. Also acts on activated and resting B-cells to induce immunoglobulin production, growth, and differentiation. Mechanistically, exerts its biological effects through a receptor composed of IL5RA subunit and the cytokine receptor common subunit beta/CSF2RB. Binding to the receptor leads to activation of various kinases including LYN, SYK and JAK2 and thereby propagates signals through the RAS-MAPK and JAK-STAT5 pathways respectively. The protein is Interleukin-5 (IL5) of Cercocebus atys (Sooty mangabey).